The chain runs to 115 residues: Holo-[acyl-carrier-protein] synthase (115 aa).

Aspartate 6 and glutamate 51 together coordinate Mg(2+).

Belongs to the P-Pant transferase superfamily. AcpS family. Requires Mg(2+) as cofactor.

It is found in the cytoplasm. It catalyses the reaction apo-[ACP] + CoA = holo-[ACP] + adenosine 3',5'-bisphosphate + H(+). In terms of biological role, transfers the 4'-phosphopantetheine moiety from coenzyme A to a Ser of acyl-carrier-protein. The polypeptide is Holo-[acyl-carrier-protein] synthase (Campylobacter jejuni subsp. jejuni serotype O:2 (strain ATCC 700819 / NCTC 11168)).